We begin with the raw amino-acid sequence, 217 residues long: MRFGVVGFKGKMGKVILDVFSNDGHTPILLIDKDEIIEEDFPEVIVDFSTPDALEKTSSYCEKYNSNLVIGTTALTEKHFKILENLSKKVAVVQSYNFSIGINILLELLEKATKMLNDWDCEITEIHHSKKKDKPSGTAILLKNALNREVEIHSLRLGGIPGDHTVLFSNEGELIEIKHRAISRKVFALGALKAAKFILNKKSGFYTFKDIIKEAFI.

NAD(+) is bound by residues 7-12 (GFKGKM), 71-73 (GTT), and 95-98 (SYNF). The active-site Proton donor/acceptor is the His-127. His-128 contributes to the (S)-2,3,4,5-tetrahydrodipicolinate binding site. The active-site Proton donor is the Lys-131. 137 to 138 (GT) contributes to the (S)-2,3,4,5-tetrahydrodipicolinate binding site.

It belongs to the DapB family.

It localises to the cytoplasm. The catalysed reaction is (S)-2,3,4,5-tetrahydrodipicolinate + NAD(+) + H2O = (2S,4S)-4-hydroxy-2,3,4,5-tetrahydrodipicolinate + NADH + H(+). It catalyses the reaction (S)-2,3,4,5-tetrahydrodipicolinate + NADP(+) + H2O = (2S,4S)-4-hydroxy-2,3,4,5-tetrahydrodipicolinate + NADPH + H(+). It functions in the pathway amino-acid biosynthesis; L-lysine biosynthesis via DAP pathway; (S)-tetrahydrodipicolinate from L-aspartate: step 4/4. In terms of biological role, catalyzes the conversion of 4-hydroxy-tetrahydrodipicolinate (HTPA) to tetrahydrodipicolinate. The sequence is that of 4-hydroxy-tetrahydrodipicolinate reductase from Thermosipho africanus (strain TCF52B).